A 574-amino-acid polypeptide reads, in one-letter code: Enolase 4 (574 aa).

Residues 165–175 show a composition bias toward basic and acidic residues; sequence EKERRQMEREA. The interval 165–221 is disordered; the sequence is EKERRQMEREASPMPLQPEPSPVTSPAPGKKKGSGKGKKAAVVEKPIPPEETPEAVV. Residues 179-189 show a composition bias toward pro residues; sequence PLQPEPSPVTS. Residues 193-203 show a composition bias toward basic residues; the sequence is GKKKGSGKGKK. A substrate-binding site is contributed by E287. K467 (proton acceptor) is an active-site residue. K518 lines the substrate pocket.

The protein belongs to the enolase family.

The enzyme catalyses (2R)-2-phosphoglycerate = phosphoenolpyruvate + H2O. The protein operates within carbohydrate degradation; glycolysis; pyruvate from D-glyceraldehyde 3-phosphate: step 4/5. This chain is Enolase 4 (eno4), found in Xenopus tropicalis (Western clawed frog).